Here is a 290-residue protein sequence, read N- to C-terminus: Eukaryotic translation initiation factor 3 subunit F-2 (290 aa).

The MPN domain occupies 12–150 (VRLQPLVLFQ…TRLYCGVTMG (139 aa)).

It belongs to the eIF-3 subunit F family. In terms of assembly, component of the eukaryotic translation initiation factor 3 (eIF-3) complex. The eIF-3 complex interacts with pix.

Its subcellular location is the cytoplasm. Component of the eukaryotic translation initiation factor 3 (eIF-3) complex, which is involved in protein synthesis of a specialized repertoire of mRNAs and, together with other initiation factors, stimulates binding of mRNA and methionyl-tRNAi to the 40S ribosome. The eIF-3 complex specifically targets and initiates translation of a subset of mRNAs involved in cell proliferation. This is Eukaryotic translation initiation factor 3 subunit F-2 from Drosophila virilis (Fruit fly).